The sequence spans 120 residues: Small ribosomal subunit protein uS19 (120 aa).

The protein belongs to the universal ribosomal protein uS19 family.

The protein is Small ribosomal subunit protein uS19 (RPS15) of Naegleria gruberi (Amoeba).